The chain runs to 186 residues: Peptidyl-tRNA hydrolase (186 aa).

A tRNA-binding site is contributed by Tyr14. Catalysis depends on His19, which acts as the Proton acceptor. The tRNA site is built by Phe65, Asn67, and Asn113.

This sequence belongs to the PTH family. Monomer.

The protein resides in the cytoplasm. It catalyses the reaction an N-acyl-L-alpha-aminoacyl-tRNA + H2O = an N-acyl-L-amino acid + a tRNA + H(+). In terms of biological role, hydrolyzes ribosome-free peptidyl-tRNAs (with 1 or more amino acids incorporated), which drop off the ribosome during protein synthesis, or as a result of ribosome stalling. Its function is as follows. Catalyzes the release of premature peptidyl moieties from peptidyl-tRNA molecules trapped in stalled 50S ribosomal subunits, and thus maintains levels of free tRNAs and 50S ribosomes. The protein is Peptidyl-tRNA hydrolase of Limosilactobacillus reuteri (strain DSM 20016) (Lactobacillus reuteri).